A 194-amino-acid chain; its full sequence is Putative manganese efflux pump MntP (194 aa).

Transmembrane regions (helical) follow at residues Pro3–Gly23, Leu37–Leu57, Asp69–Leu89, Leu110–Phe132, Cys147–Gly167, and Met172–Gly192.

It belongs to the MntP (TC 9.B.29) family.

The protein resides in the cell inner membrane. Functionally, probably functions as a manganese efflux pump. The sequence is that of Putative manganese efflux pump MntP from Xanthomonas axonopodis pv. citri (strain 306).